A 29-amino-acid polypeptide reads, in one-letter code: Alpha-amylase inhibitor 2 (29 aa).

This sequence belongs to the protease inhibitor I6 (cereal trypsin/alpha-amylase inhibitor) family.

The protein resides in the secreted. Functionally, alpha-amylase inhibitor. The polypeptide is Alpha-amylase inhibitor 2 (Saussurea costus (Costus)).